We begin with the raw amino-acid sequence, 631 residues long: MESSILKSPNLSSPSFGVPSIPALSSSSTSPFSSLHLRSQNHRTISLTTAGKFRVSYSLSASSPLPPHAPRRRPNYIPNRISDPNYVRIFDTTLRDGEQSPGATLTSKEKLDIARQLAKLGVDIIEAGFPAASKDDFEAVKTIAETVGNTVDENGYVPVICGLSRCNKKDIETAWEAVKYAKRPRIHTFIATSDIHLKYKLKKSKEEVIEIARNMVRFARSLGCEDVEFSPEDAGRSEREYLYEILGEVIKAGATTLNIPDTVGITLPSEFGQLIADIKANTPGIQNVIISTHCQNDLGLSTANTLSGAHSGARQVEVTINGIGERAGNASLEEVVMAIKCRGDHVLGGLFTGIDTRHIVMTSKMVEEYTGMQTQPHKAIVGANAFAHESGIHQDGMLKHKGTYEIMSPEEIGLERSNDAGIVLGKLSGRHALKDRLNELGYVLDDGQLSNLFWRFKAVAEQKKRVTDADLIALVSDEVFQPEAVWKLLDMQITCGTLGLSTSTVKLADSDGKEHVACSVGTGPVDAAYKAVDLIVKEPATLLEYSMNAVTEGIDAIATTRVLIRGDNNYSSTNAVTGESVERTFSGTGAGMDIVVSSVKAYVGALNKMLGFKEHTSTLSKTPLETNEVPA.

A chloroplast-targeting transit peptide spans 1-46; the sequence is MESSILKSPNLSSPSFGVPSIPALSSSSTSPFSSLHLRSQNHRTIS. Residues 87-360 form the Pyruvate carboxyltransferase domain; the sequence is VRIFDTTLRD…FTGIDTRHIV (274 aa). A divalent metal cation is bound by residues D96, H293, and N329.

This sequence belongs to the alpha-IPM synthase/homocitrate synthase family. LeuA type 1 subfamily. In terms of assembly, homotetramer. The cofactor is Mg(2+). Mn(2+) is required as a cofactor. In terms of tissue distribution, expressed in roots, stems, leaves, flowers and siliques.

The protein resides in the plastid. Its subcellular location is the chloroplast. It catalyses the reaction 3-methyl-2-oxobutanoate + acetyl-CoA + H2O = (2S)-2-isopropylmalate + CoA + H(+). Its pathway is amino-acid biosynthesis; L-leucine biosynthesis; L-leucine from 3-methyl-2-oxobutanoate: step 1/4. Its activity is regulated as follows. Feedback inhibition by Leu. Catalyzes the condensation of the acetyl group of acetyl-CoA with 3-methyl-2-oxobutanoate (2-oxoisovalerate) to form 3-carboxy-3-hydroxy-4-methylpentanoate (2-isopropylmalate). Involved in Leu biosynthesis, but does not participate in the chain elongation of glucosinolates. The polypeptide is 2-isopropylmalate synthase 2, chloroplastic (Arabidopsis thaliana (Mouse-ear cress)).